A 504-amino-acid polypeptide reads, in one-letter code: ATP synthase subunit alpha 1 (504 aa).

Residue 172 to 179 (GDRQTGKT) participates in ATP binding.

It belongs to the ATPase alpha/beta chains family. F-type ATPases have 2 components, CF(1) - the catalytic core - and CF(0) - the membrane proton channel. CF(1) has five subunits: alpha(3), beta(3), gamma(1), delta(1), epsilon(1). CF(0) has three main subunits: a(1), b(2) and c(9-12). The alpha and beta chains form an alternating ring which encloses part of the gamma chain. CF(1) is attached to CF(0) by a central stalk formed by the gamma and epsilon chains, while a peripheral stalk is formed by the delta and b chains.

The protein resides in the cell inner membrane. The catalysed reaction is ATP + H2O + 4 H(+)(in) = ADP + phosphate + 5 H(+)(out). Produces ATP from ADP in the presence of a proton gradient across the membrane. The alpha chain is a regulatory subunit. The polypeptide is ATP synthase subunit alpha 1 (Rhodopirellula baltica (strain DSM 10527 / NCIMB 13988 / SH1)).